We begin with the raw amino-acid sequence, 941 residues long: Glycine dehydrogenase (decarboxylating) (941 aa).

An N6-(pyridoxal phosphate)lysine modification is found at lysine 692.

The protein belongs to the GcvP family. As to quaternary structure, the glycine cleavage system is composed of four proteins: P, T, L and H. It depends on pyridoxal 5'-phosphate as a cofactor.

It carries out the reaction N(6)-[(R)-lipoyl]-L-lysyl-[glycine-cleavage complex H protein] + glycine + H(+) = N(6)-[(R)-S(8)-aminomethyldihydrolipoyl]-L-lysyl-[glycine-cleavage complex H protein] + CO2. Its function is as follows. The glycine cleavage system catalyzes the degradation of glycine. The P protein binds the alpha-amino group of glycine through its pyridoxal phosphate cofactor; CO(2) is released and the remaining methylamine moiety is then transferred to the lipoamide cofactor of the H protein. The protein is Glycine dehydrogenase (decarboxylating) of Mycobacterium tuberculosis (strain ATCC 25177 / H37Ra).